The chain runs to 590 residues: ATP-dependent zinc metalloprotease FtsH 1 (590 aa).

Residues M1 to Q8 lie on the Cytoplasmic side of the membrane. Residues L9–T29 form a helical membrane-spanning segment. The Extracellular portion of the chain corresponds to Q30 to S103. A helical transmembrane segment spans residues V104–L124. At S125 to M590 the chain is on the cytoplasmic side. G195–T202 contributes to the ATP binding site. H418 is a Zn(2+) binding site. The active site involves E419. H422 and D496 together coordinate Zn(2+).

In the central section; belongs to the AAA ATPase family. It in the C-terminal section; belongs to the peptidase M41 family. In terms of assembly, homohexamer. The cofactor is Zn(2+).

The protein localises to the cell membrane. Functionally, acts as a processive, ATP-dependent zinc metallopeptidase for both cytoplasmic and membrane proteins. Plays a role in the quality control of integral membrane proteins. The polypeptide is ATP-dependent zinc metalloprotease FtsH 1 (Alkaliphilus metalliredigens (strain QYMF)).